We begin with the raw amino-acid sequence, 340 residues long: tRNA N6-adenosine threonylcarbamoyltransferase (340 aa).

2 residues coordinate Fe cation: H115 and H119. Substrate-binding positions include 138-142 (VVSGG), D171, G184, D188, and N278. D306 contacts Fe cation.

It belongs to the KAE1 / TsaD family. Fe(2+) serves as cofactor.

The protein resides in the cytoplasm. The catalysed reaction is L-threonylcarbamoyladenylate + adenosine(37) in tRNA = N(6)-L-threonylcarbamoyladenosine(37) in tRNA + AMP + H(+). Required for the formation of a threonylcarbamoyl group on adenosine at position 37 (t(6)A37) in tRNAs that read codons beginning with adenine. Is involved in the transfer of the threonylcarbamoyl moiety of threonylcarbamoyl-AMP (TC-AMP) to the N6 group of A37, together with TsaE and TsaB. TsaD likely plays a direct catalytic role in this reaction. The chain is tRNA N6-adenosine threonylcarbamoyltransferase from Clostridium botulinum (strain Hall / ATCC 3502 / NCTC 13319 / Type A).